The primary structure comprises 662 residues: DNA ligase (662 aa).

NAD(+)-binding positions include 32 to 36 (DAEYD), 75 to 76 (SL), and Glu106. Lys108 functions as the N6-AMP-lysine intermediate in the catalytic mechanism. Arg129, Glu164, Lys271, and Lys295 together coordinate NAD(+). Zn(2+) contacts are provided by Cys389, Cys392, Cys407, and Cys413. Positions 580–662 (SSNSVLNNKI…HKVISLGVFK (83 aa)) constitute a BRCT domain.

This sequence belongs to the NAD-dependent DNA ligase family. LigA subfamily. It depends on Mg(2+) as a cofactor. Mn(2+) serves as cofactor.

The enzyme catalyses NAD(+) + (deoxyribonucleotide)n-3'-hydroxyl + 5'-phospho-(deoxyribonucleotide)m = (deoxyribonucleotide)n+m + AMP + beta-nicotinamide D-nucleotide.. Functionally, DNA ligase that catalyzes the formation of phosphodiester linkages between 5'-phosphoryl and 3'-hydroxyl groups in double-stranded DNA using NAD as a coenzyme and as the energy source for the reaction. It is essential for DNA replication and repair of damaged DNA. The protein is DNA ligase of Wolbachia pipientis wMel.